The chain runs to 88 residues: uncharacterized protein (88 aa).

The helical transmembrane segment at 34–54 threads the bilayer; it reads IIIAVILIFFLTIVGLFYLII.

The protein resides in the membrane. This is an uncharacterized protein from Ureaplasma parvum serovar 3 (strain ATCC 700970).